A 619-amino-acid polypeptide reads, in one-letter code: Replication restart protein PriA (619 aa).

Residues 119-285 form the Helicase ATP-binding domain; that stretch reads LKELQKHSAS…KDKALVRLKG (167 aa). ATP is bound at residue 132-139; the sequence is GDTGSGKT. The short motif at 228-231 is the DEAH box element; it reads DEEH. Positions 336, 339, 345, 348, 363, 366, 376, and 379 each coordinate Zn(2+). The 162-residue stretch at 371 to 532 folds into the Helicase C-terminal domain; it reads PIPKICSACQ…ELYPPFSRLC (162 aa).

This sequence belongs to the helicase family. PriA subfamily. As to quaternary structure, component of the replication restart primosome. Zn(2+) is required as a cofactor.

It carries out the reaction Couples ATP hydrolysis with the unwinding of duplex DNA by translocating in the 3'-5' direction.. The enzyme catalyses ATP + H2O = ADP + phosphate + H(+). Initiates the restart of stalled replication forks, which reloads the replicative helicase on sites other than the origin of replication. Recognizes and binds to abandoned replication forks and remodels them to uncover a helicase loading site. Promotes assembly of the primosome at these replication forks. Its function is as follows. Important for survival of the bacteria in host cells. The sequence is that of Replication restart protein PriA from Helicobacter pylori (strain ATCC 700392 / 26695) (Campylobacter pylori).